Here is a 653-residue protein sequence, read N- to C-terminus: E3 ubiquitin-protein ligase TRIM32 (653 aa).

N-acetylalanine is present on Ala2. The RING-type zinc finger occupies 20-65; it reads CPICMESFTEEQLRPKLLHCGHTICRQCLEKLLASSINGVRCPFCS. Ser55 is modified (phosphoserine; by CHEK2). Zn(2+) is bound by residues Cys100, Cys103, Cys123, and His128. The B box-type zinc finger occupies 103 to 133; sequence CGRRLPRQFCRSCGLVLCEPCREADHQPPGH. Positions 138–197 form a coiled coil; that stretch reads VKEAAEERRRDFGEKLTRLRELMGELQRRKAALEGVSKDLQARYKAVLQEYGHEERRVQD. A phosphoserine mark is found at Ser328, Ser335, and Ser339. NHL repeat units follow at residues 358–401, 415–458, 459–499, 562–605, and 606–646; these read LKKM…FTRK, DSFV…YTLD, GHCV…FTVD, GRQI…FPKG, and GGYS…YSYH.

It belongs to the TRIM/RBCC family. In terms of assembly, it self-associates. Interacts with DTNBP1. Interacts with PIAS4/PIASY upon treatment with UVB and TNF-alpha. Interacts with AMBRA1; promoting activation of ULK1 through unanchored 'Lys-63'-linked polyubiquitin chains. Interacts with TICAM1 and TAX1BP1; these interactions target TICAM1 to TAX1BP1-mediated selective autophagic degradation. (Microbial infection) Interacts with S.typhimurium protein SseK3; SseK3 does not glycosylate TRIM32. Ubiquitinated. In terms of processing, phosphorylation at Ser-55 by CHEK2 under oxidative stress, activates the E3 ligase activity and promotes ATG7 ubiquitination leading to positive regulation of the autophagosme assembly. In terms of tissue distribution, spleen, thymus, prostate, testis, ovary, intestine, colon and skeletal muscle.

It is found in the cytoplasm. Its subcellular location is the mitochondrion. It localises to the endoplasmic reticulum. The catalysed reaction is S-ubiquitinyl-[E2 ubiquitin-conjugating enzyme]-L-cysteine + [acceptor protein]-L-lysine = [E2 ubiquitin-conjugating enzyme]-L-cysteine + N(6)-ubiquitinyl-[acceptor protein]-L-lysine.. The protein operates within protein modification; protein ubiquitination. E3 ubiquitin ligase that plays a role in various biological processes including neural stem cell differentiation, innate immunity, inflammatory resonse and autophagy. Plays a role in virus-triggered induction of IFN-beta and TNF-alpha by mediating the ubiquitination of STING1. Mechanistically, targets STING1 for 'Lys-63'-linked ubiquitination which promotes the interaction of STING1 with TBK1. Regulates bacterial clearance and promotes autophagy in Mycobacterium tuberculosis-infected macrophages. Negatively regulates TLR3/4-mediated innate immune and inflammatory response by triggering the autophagic degradation of TICAM1 in an E3 activity-independent manner. Plays an essential role in oxidative stress induced cell death by inducing loss of transmembrane potential and enhancing mitochondrial reactive oxygen species (ROS) production during oxidative stress conditions. Ubiquitinates XIAP and targets it for proteasomal degradation. Ubiquitinates DTNBP1 (dysbindin) and promotes its degradation. May ubiquitinate BBS2. Ubiquitinates PIAS4/PIASY and promotes its degradation in keratinocytes treated with UVB and TNF-alpha. Also acts as a regulator of autophagy by mediating formation of unanchored 'Lys-63'-linked polyubiquitin chains that activate ULK1: interaction with AMBRA1 is required for ULK1 activation. Positively regulates dendritic branching by promoting ubiquitination and subsequent degradation of the epigenetic factor CDYL. Under metabolic stress and phosphorylation by CHK2, mediates 'Lys-63'-linked ubiquitination of ATG7 at 'Lys-45' to initiate autophagy. Its function is as follows. (Microbial infection) May play a significant role in mediating the biological activity of the HIV-1 Tat protein in vivo. Binds specifically to the activation domain of HIV-1 Tat and can also interact with the HIV-2 and EIAV Tat proteins in vivo. In Homo sapiens (Human), this protein is E3 ubiquitin-protein ligase TRIM32.